The sequence spans 230 residues: Esterase OVCA2 (230 aa).

Catalysis depends on charge relay system residues Ser-124, Asp-182, and His-209.

Belongs to the LovG family.

It carries out the reaction a carboxylic ester + H2O = an alcohol + a carboxylate + H(+). Functionally, exhibits ester hydrolase activity with a strong preference for long-chain alkyl ester substrates and high selectivity against a variety of short, branched, and substituted esters. Is able to hydrolyze ester bonds within a wide range of p-nitrophenyl derivatives (C2-C14) in vitro, with a strong preference toward substrates of &gt;8 carbons. This is Esterase OVCA2 (ovca2) from Xenopus tropicalis (Western clawed frog).